A 430-amino-acid chain; its full sequence is Nacrein-like protein P2 (430 aa).

N-linked (GlcNAc...) asparagine glycosylation occurs at asparagine 27. The Alpha-carbonic anhydrase domain maps to 33–429; the sequence is AGFSYDRSIC…KNKVTVYKSF (397 aa). Zn(2+)-binding residues include histidine 132, histidine 134, and histidine 157. Residues 201-312 form a disordered region; sequence DEPDDEECKR…GENGHKHGCR (112 aa). Residues 207-219 show a composition bias toward basic and acidic residues; the sequence is ECKRILKGHHPDN. Low complexity predominate over residues 220 to 304; the sequence is NENGNGDNGN…NNGENGNNGE (85 aa). Tandem repeats lie at residues 225–227, 228–230, 231–233, 234–236, 237–239, 240–242, 243–245, 246–248, 249–251, 252–254, 255–257, 258–260, 261–263, 264–266, 267–269, 270–272, 273–275, 276–278, 279–281, 282–284, 285–287, 288–290, 291–293, 294–296, 297–299, 300–301, and 303–305. The interval 225-305 is 27 X 3 AA approximate tandem repeats of G-X-N; the sequence is GDNGNNGYNG…NGENGNNGEN (81 aa). 370-371 is a substrate binding site; the sequence is TT.

The protein belongs to the alpha-carbonic anhydrase family. As to quaternary structure, homooligomer; disulfide-linked. May also be disulfide-linked to insoluble organic matrix. It depends on Zn(2+) as a cofactor. Expressed in the mantle.

Its subcellular location is the secreted. It is found in the extracellular space. The protein localises to the extracellular matrix. It carries out the reaction hydrogencarbonate + H(+) = CO2 + H2O. In terms of biological role, acts as a negative regulator for calcification in the shells of mollusks. May function both as a calcium concentrator and as a carbonic anhydrase required for production of carbonate ions, which are assembled to CaCO(3) at mineralization sites. Is important for shell formation in both the calcitic prismatic layer and the aragonitic nacreous layer. Shows inhibitory activity of crystal formation when present in free state but, when attached to the insoluble matrix, may regulate the form and size of aragonite crystal. The chain is Nacrein-like protein P2 from Mizuhopecten yessoensis (Japanese scallop).